The primary structure comprises 246 residues: Triosephosphate isomerase (246 aa).

9 to 11 (NWK) contributes to the substrate binding site. His-99 functions as the Electrophile in the catalytic mechanism. Glu-168 serves as the catalytic Proton acceptor. Residues Gly-174, Ser-207, and 228-229 (GG) contribute to the substrate site.

It belongs to the triosephosphate isomerase family. In terms of assembly, homodimer.

It is found in the cytoplasm. The catalysed reaction is D-glyceraldehyde 3-phosphate = dihydroxyacetone phosphate. It functions in the pathway carbohydrate biosynthesis; gluconeogenesis. Its pathway is carbohydrate degradation; glycolysis; D-glyceraldehyde 3-phosphate from glycerone phosphate: step 1/1. Functionally, involved in the gluconeogenesis. Catalyzes stereospecifically the conversion of dihydroxyacetone phosphate (DHAP) to D-glyceraldehyde-3-phosphate (G3P). This chain is Triosephosphate isomerase, found in Prochlorococcus marinus (strain NATL1A).